The primary structure comprises 152 residues: Large ribosomal subunit protein uL22 (152 aa).

It belongs to the universal ribosomal protein uL22 family. As to quaternary structure, part of the 50S ribosomal subunit.

This protein binds specifically to 23S rRNA. It makes multiple contacts with different domains of the 23S rRNA in the assembled 50S subunit and ribosome. Its function is as follows. The globular domain of the protein is located near the polypeptide exit tunnel on the outside of the subunit, while an extended beta-hairpin is found that lines the wall of the exit tunnel in the center of the 70S ribosome. In Cenarchaeum symbiosum (strain A), this protein is Large ribosomal subunit protein uL22.